Reading from the N-terminus, the 368-residue chain is Glutamate 5-kinase (368 aa).

Lys-9 serves as a coordination point for ATP. Substrate contacts are provided by Ser-49, Asp-136, and Asn-148. ATP is bound by residues Thr-168–Asp-169 and Thr-210–Lys-216. The 79-residue stretch at Ala-275–Glu-353 folds into the PUA domain.

It belongs to the glutamate 5-kinase family.

It is found in the cytoplasm. The enzyme catalyses L-glutamate + ATP = L-glutamyl 5-phosphate + ADP. The protein operates within amino-acid biosynthesis; L-proline biosynthesis; L-glutamate 5-semialdehyde from L-glutamate: step 1/2. In terms of biological role, catalyzes the transfer of a phosphate group to glutamate to form L-glutamate 5-phosphate. This Haemophilus influenzae (strain ATCC 51907 / DSM 11121 / KW20 / Rd) protein is Glutamate 5-kinase.